A 153-amino-acid chain; its full sequence is Troponin C (153 aa).

4 EF-hand domains span residues 9-44 (EQVQMLRKAFDMFDRDKKGYIHTNMVSTILRTLGQT), 45-80 (FEENDLQQLIIEIDADGSGELEFDEFLTLTARFLVE), 85-120 (AMQEELREAFRMYDKEGNGYIPTSALREILRALDDK), and 121-153 (LTEDELDEMIAEIDTDGSGTVDFDEFMEMMTGD). 5 residues coordinate Ca(2+): D58, D60, S62, E64, and E69. Residues D134, D136, S138, T140, and E145 each contribute to the Ca(2+) site.

The protein belongs to the troponin C family.

Functionally, troponin is the central regulatory protein of striated muscle contraction. Tn consists of three components: Tn-I which is the inhibitor of actomyosin ATPase, Tn-T which contains the binding site for tropomyosin and Tn-C. The binding of calcium to Tn-C abolishes the inhibitory action of Tn on actin filaments. The chain is Troponin C from Tyrophagus putrescentiae (Mold mite).